Consider the following 447-residue polypeptide: N-succinylarginine dihydrolase (447 aa).

Residues 19-28 (AGLSFGNEAS), Asn110, and 137-138 (HR) contribute to the substrate site. Glu174 is an active-site residue. Arg212 provides a ligand contact to substrate. His248 is an active-site residue. Residues Asp250 and Asn359 each contribute to the substrate site. Catalysis depends on Cys365, which acts as the Nucleophile.

It belongs to the succinylarginine dihydrolase family. Homodimer.

It carries out the reaction N(2)-succinyl-L-arginine + 2 H2O + 2 H(+) = N(2)-succinyl-L-ornithine + 2 NH4(+) + CO2. Its pathway is amino-acid degradation; L-arginine degradation via AST pathway; L-glutamate and succinate from L-arginine: step 2/5. In terms of biological role, catalyzes the hydrolysis of N(2)-succinylarginine into N(2)-succinylornithine, ammonia and CO(2). The protein is N-succinylarginine dihydrolase of Escherichia coli (strain K12 / MC4100 / BW2952).